We begin with the raw amino-acid sequence, 592 residues long: V-type ATP synthase alpha chain (592 aa).

233–240 is an ATP binding site; the sequence is GPFGSGKT.

Belongs to the ATPase alpha/beta chains family.

It catalyses the reaction ATP + H2O + 4 H(+)(in) = ADP + phosphate + 5 H(+)(out). Its function is as follows. Produces ATP from ADP in the presence of a proton gradient across the membrane. The V-type alpha chain is a catalytic subunit. This Clostridium botulinum (strain Loch Maree / Type A3) protein is V-type ATP synthase alpha chain.